The sequence spans 603 residues: Aspartate--tRNA(Asp/Asn) ligase (603 aa).

Glu182 is a binding site for L-aspartate. Positions Gln206–Lys209 are aspartate. Arg228 provides a ligand contact to L-aspartate. Residues Arg228–Glu230 and Gln237 each bind ATP. Position 454 (His454) interacts with L-aspartate. Residue Glu500 coordinates ATP. Position 507 (Arg507) interacts with L-aspartate. ATP is bound at residue Gly552 to Arg555.

It belongs to the class-II aminoacyl-tRNA synthetase family. Type 1 subfamily. In terms of assembly, homodimer.

The protein resides in the cytoplasm. The enzyme catalyses tRNA(Asx) + L-aspartate + ATP = L-aspartyl-tRNA(Asx) + AMP + diphosphate. Functionally, aspartyl-tRNA synthetase with relaxed tRNA specificity since it is able to aspartylate not only its cognate tRNA(Asp) but also tRNA(Asn). Reaction proceeds in two steps: L-aspartate is first activated by ATP to form Asp-AMP and then transferred to the acceptor end of tRNA(Asp/Asn). The chain is Aspartate--tRNA(Asp/Asn) ligase from Aquifex aeolicus (strain VF5).